Here is a 338-residue protein sequence, read N- to C-terminus: tRNA pseudouridine synthase D (338 aa).

Residue Asp-79 is the Nucleophile of the active site. The TRUD domain maps to 154–303 (GVPNYFGEQR…EEAWRANILY (150 aa)).

This sequence belongs to the pseudouridine synthase TruD family.

The catalysed reaction is uridine(13) in tRNA = pseudouridine(13) in tRNA. Responsible for synthesis of pseudouridine from uracil-13 in transfer RNAs. The chain is tRNA pseudouridine synthase D from Legionella pneumophila (strain Corby).